We begin with the raw amino-acid sequence, 485 residues long: NADH-quinone oxidoreductase subunit N (485 aa).

14 helical membrane passes run Leu8–Ile28, Phe35–Val55, Gly71–Ala91, Phe105–Leu125, Ala127–Phe147, Tyr159–Ala179, Leu203–Phe223, Pro235–Met255, Val271–Gln291, Leu297–Gln317, Val326–Leu346, Ala373–Ile393, Trp408–Val430, and Ile455–Ile475.

This sequence belongs to the complex I subunit 2 family. In terms of assembly, NDH-1 is composed of 13 different subunits. Subunits NuoA, H, J, K, L, M, N constitute the membrane sector of the complex.

The protein resides in the cell inner membrane. It carries out the reaction a quinone + NADH + 5 H(+)(in) = a quinol + NAD(+) + 4 H(+)(out). In terms of biological role, NDH-1 shuttles electrons from NADH, via FMN and iron-sulfur (Fe-S) centers, to quinones in the respiratory chain. The immediate electron acceptor for the enzyme in this species is believed to be ubiquinone. Couples the redox reaction to proton translocation (for every two electrons transferred, four hydrogen ions are translocated across the cytoplasmic membrane), and thus conserves the redox energy in a proton gradient. The chain is NADH-quinone oxidoreductase subunit N from Salmonella dublin (strain CT_02021853).